Reading from the N-terminus, the 155-residue chain is MATRNPPPQEYESDDDSYEVLDLTEYARRHHWWNRVFGHSSGPMVEKYSVATQIVMGGVSGWCAGFLFQKVGKLAATAVGGGFLLLQIASHSGYVQIDWKRVEKDVNKAKRQIKKRANKAAPEINNIIEEATEFVKQNIVISSGFVGGFLLGLAS.

Topologically, residues 1 to 47 are cytoplasmic; that stretch reads MATRNPPPQEYESDDDSYEVLDLTEYARRHHWWNRVFGHSSGPMVEK. Phosphoserine occurs at positions 13 and 17. Residue Y18 is modified to Phosphotyrosine; by SRC. The YXXL motif lies at 18–21; the sequence is YEVL. A helical membrane pass occupies residues 48–68; that stretch reads YSVATQIVMGGVSGWCAGFLF. Residues 69–74 lie on the Mitochondrial intermembrane side of the membrane; that stretch reads QKVGKL. A helical transmembrane segment spans residues 75–95; sequence AATAVGGGFLLLQIASHSGYV. Topologically, residues 96–133 are cytoplasmic; it reads QIDWKRVEKDVNKAKRQIKKRANKAAPEINNIIEEATE. A Glycyl lysine isopeptide (Lys-Gly) (interchain with G-Cter in ubiquitin) cross-link involves residue K119. Residues 134–154 form a helical membrane-spanning segment; it reads FVKQNIVISSGFVGGFLLGLA. S155 is a topological domain (mitochondrial intermembrane).

It belongs to the FUN14 family. Interacts (via YXXL motif) with MAP1 LC3 family proteins MAP1LC3A, MAP1LC3B and GABARAP. Interacts with DNM1L/DPR1. Interacts with GPX4. Phosphorylation at Ser-13 by CK2 and at Tyr-18 by SRC inhibits activation of mitophagy. Following hypoxia, dephosphorylated at Tyr-18, leading to interaction with MAP1 LC3 family proteins and triggering mitophagy. Dephosphorylation is mediated by PGAM5. Phosphorylated by ULK1 at Ser-17 which enhances FUNDC1 binding to LC3. Post-translationally, ubiquitinated on Lys-119. Deubiquitinated by USP19; leading to hypoxia-induced DRP1 oligomerization and GTPase activity.

It is found in the mitochondrion outer membrane. Its function is as follows. Integral mitochondrial outer-membrane protein that mediates the formation of mitochondria-associated endoplasmic reticulum membranes (MAMs). In turn, mediates angiogenesis and neoangiogenesis through interference with intracellular Ca(2+) communication and regulation of the vascular endothelial growth factor receptor KDR/VEGFR2 expression at both mRNA and protein levels. Also acts as an activator of hypoxia-induced mitophagy, an important mechanism for mitochondrial quality and homeostasis, by interacting with and recruiting LC3 protein family to mitochondria. Mechanistically, recruits DRP1 at ER-mitochondria contact sites leading to DRP1 oligomerization and GTPase activity to facilitate mitochondrial fission during hypoxia. Additionally, plays a role in hepatic ferroptosis by interacting directly with glutathione peroxidase/GPX4 to facilitate its recruitment into mitochondria through TOM/TIM complex where it is degraded by mitophagy. In Bos taurus (Bovine), this protein is FUN14 domain-containing protein 1 (FUNDC1).